Consider the following 275-residue polypeptide: Large ribosomal subunit protein uL2 (275 aa).

Disordered regions lie at residues 28-48 (KPYA…NNGR) and 223-275 (VVMN…RNKK).

It belongs to the universal ribosomal protein uL2 family. Part of the 50S ribosomal subunit. Forms a bridge to the 30S subunit in the 70S ribosome.

Its function is as follows. One of the primary rRNA binding proteins. Required for association of the 30S and 50S subunits to form the 70S ribosome, for tRNA binding and peptide bond formation. It has been suggested to have peptidyltransferase activity; this is somewhat controversial. Makes several contacts with the 16S rRNA in the 70S ribosome. The protein is Large ribosomal subunit protein uL2 of Photobacterium profundum (strain SS9).